A 296-amino-acid chain; its full sequence is Ribosomal RNA small subunit methyltransferase H (296 aa).

S-adenosyl-L-methionine-binding positions include 30-32, aspartate 49, phenylalanine 76, aspartate 97, and glutamine 104; that span reads GGH.

Belongs to the methyltransferase superfamily. RsmH family.

The protein resides in the cytoplasm. The catalysed reaction is cytidine(1402) in 16S rRNA + S-adenosyl-L-methionine = N(4)-methylcytidine(1402) in 16S rRNA + S-adenosyl-L-homocysteine + H(+). Its function is as follows. Specifically methylates the N4 position of cytidine in position 1402 (C1402) of 16S rRNA. In Mesomycoplasma hyopneumoniae (strain 232) (Mycoplasma hyopneumoniae), this protein is Ribosomal RNA small subunit methyltransferase H.